A 717-amino-acid chain; its full sequence is uncharacterized protein (717 aa).

A helical transmembrane segment spans residues 19-38; the sequence is VFLSTIFVSIIFCLGILFLV.

To E.coli YtfN.

It localises to the membrane. This is an uncharacterized protein from Buchnera aphidicola subsp. Baizongia pistaciae (strain Bp).